We begin with the raw amino-acid sequence, 295 residues long: Glycine--tRNA ligase alpha subunit (295 aa).

This sequence belongs to the class-II aminoacyl-tRNA synthetase family. Tetramer of two alpha and two beta subunits.

The protein resides in the cytoplasm. It catalyses the reaction tRNA(Gly) + glycine + ATP = glycyl-tRNA(Gly) + AMP + diphosphate. This is Glycine--tRNA ligase alpha subunit from Shouchella clausii (strain KSM-K16) (Alkalihalobacillus clausii).